The chain runs to 705 residues: Pentatricopeptide repeat-containing protein At1g09410, mitochondrial (705 aa).

The transit peptide at 1–11 directs the protein to the mitochondrion; it reads MKSQILLRRTY. PPR repeat units lie at residues 16–46, 47–77, 78–112, 113–139, 140–170, 171–205, 206–232, 233–267, 268–294, 295–329, 330–364, 365–395, 396–430, 432–462, and 468–498; these read PPPT…CDSK, SISS…MPDR, NIIS…NVVS, WTAL…MPEK, NKVS…IPDK, DNIA…SVIT, WTTM…MPEK, TEVS…PVIA, CNAM…MKER, NDAS…GVRP, TFPT…QFDV, DVYV…FPSK, DIIM…GSTK, NEVT…MESV, and ITAH…MTVE. The tract at residues 503-578 is type E motif; it reads VWGSLLGACR…SPGCSWTEVE (76 aa). Residues 579 to 610 are type E(+) motif; that stretch reads NKVHAFTRGGINSHPEQESILKILDELDGLLR. The type DYW motif stretch occupies residues 611 to 705; sequence EAGYNPDCSY…NGECSCKDYW (95 aa).

This sequence belongs to the PPR family. PCMP-H subfamily.

The protein localises to the mitochondrion. This is Pentatricopeptide repeat-containing protein At1g09410, mitochondrial (PCMP-H18) from Arabidopsis thaliana (Mouse-ear cress).